The primary structure comprises 720 residues: Putative fatty acid oxidation complex trifunctional enzyme (720 aa).

The 3-hydroxyacyl-CoA dehydrogenase stretch occupies residues 1-384; that stretch reads MQNEIKKVCV…SWHYGPFELL (384 aa). Positions 453–720 are enoyl-CoA hydratase/isomerase; the sequence is FVITTKMNSL…TIEKLQAIVG (268 aa).

In the N-terminal section; belongs to the 3-hydroxyacyl-CoA dehydrogenase family. It in the C-terminal section; belongs to the enoyl-CoA hydratase/isomerase family.

It catalyses the reaction a (3S)-3-hydroxyacyl-CoA + NAD(+) = a 3-oxoacyl-CoA + NADH + H(+). It carries out the reaction a (3S)-3-hydroxyacyl-CoA = a (2E)-enoyl-CoA + H2O. The enzyme catalyses a 4-saturated-(3S)-3-hydroxyacyl-CoA = a (3E)-enoyl-CoA + H2O. The catalysed reaction is a (3Z)-enoyl-CoA = a 4-saturated (2E)-enoyl-CoA. It catalyses the reaction a (3E)-enoyl-CoA = a 4-saturated (2E)-enoyl-CoA. The protein is Putative fatty acid oxidation complex trifunctional enzyme of Rickettsia prowazekii (strain Madrid E).